We begin with the raw amino-acid sequence, 670 residues long: Acetyl-coenzyme A synthetase (670 aa).

CoA contacts are provided by residues 205–208 (RRGR) and threonine 326. ATP-binding positions include 402-404 (GEP), 426-431 (STWWMT), aspartate 517, arginine 532, and arginine 543. Residues histidine 556 and valine 559 each coordinate Mg(2+). Arginine 601 contributes to the CoA binding site. The residue at position 626 (lysine 626) is an N6-acetyllysine.

This sequence belongs to the ATP-dependent AMP-binding enzyme family. Requires Mg(2+) as cofactor. Acetylated. Deacetylation by the SIR2-homolog deacetylase activates the enzyme.

The catalysed reaction is acetate + ATP + CoA = acetyl-CoA + AMP + diphosphate. Catalyzes the conversion of acetate into acetyl-CoA (AcCoA), an essential intermediate at the junction of anabolic and catabolic pathways. AcsA undergoes a two-step reaction. In the first half reaction, AcsA combines acetate with ATP to form acetyl-adenylate (AcAMP) intermediate. In the second half reaction, it can then transfer the acetyl group from AcAMP to the sulfhydryl group of CoA, forming the product AcCoA. This chain is Acetyl-coenzyme A synthetase, found in Pyrobaculum aerophilum (strain ATCC 51768 / DSM 7523 / JCM 9630 / CIP 104966 / NBRC 100827 / IM2).